We begin with the raw amino-acid sequence, 413 residues long: MTLANDFGYSTAMSSSYSALHTSVEDRYHKLPNSFWVSSGQELMNNPVPCQSVSGGNSGGYLFPSSSGYCNVSAVLPHGRNLQNQPPVSTVPRDRLAMQDCPLIAQSSLINHHPQEFIDPLHEFFDFSDHVPVQNLQAESSGVRVDSSVELHKKSEWQDWADQLISVDDGSEPNWSELLGDSSSHNPNSEIPTPFLDVPRLDITANQQQQMVSSEDQLSGRNSSSSVATSKQRMRWTPELHEAFVEAVNQLGGSERATPKAVLKLLNNPGLTIYHVKSHLQKYRTARYKPETSEVTGEPQEKKMTSIEDIKSLDMKTSVEITQALRLQMEVQKRLHEQLEIQRSLQLQIEKQGRYLQMMFEKQQKIQDNKSSSSEASPKQCNGSFAEVEVGLETLTGDQNESASASRKRVRED.

Disordered regions lie at residues Ser-171–Leu-196 and Gln-208–Arg-233. Polar residues-rich tracts occupy residues Asp-181–Ile-191 and Gln-208–Lys-231. The 61-residue stretch at Ala-228 to Tyr-288 folds into the HTH myb-type domain. The H-T-H motif DNA-binding region spans Pro-259–Arg-284. The coiled coil stretch occupies residues Thr-322–Gln-342. An LHEQLE motif is present at residues Leu-335–Glu-340. A disordered region spans residues Gln-363–Asp-413. Composition is skewed to polar residues over residues Asn-369 to Gly-383 and Thr-396 to Ala-405.

This sequence belongs to the MYB-CC family. In terms of assembly, homodimers and heterodimers. Interacts with MED25. Does not interact with PHL2 or PHL3. In terms of tissue distribution, expressed in shoots and roots.

It is found in the nucleus. Functionally, transcription factor acting as central integrator of phosphate starvation responses. Regulates FER1 expression upon phosphate starvation, linking iron and phosphate homeostasis. The chain is Protein PHR1-LIKE 1 (PHL1) from Arabidopsis thaliana (Mouse-ear cress).